The following is a 447-amino-acid chain: MPSQRSSLMQPIPEETRKTPSAAAEDTRWSRPECQAWTGILLLGTCLLYCARVTMPVCTVAMSQDFGWNKKEAGIVLSSFFWGYCLTQVVGGHLGDRIGGEKVILLSASAWGFITVTTPLLAHLGSGHLAFLTFSRILTGLLQGVYFPALTSLLSQKVQESERAFTYSTVGAGSQVGTLVTGGVGSVLLDQCGWQSVFYFSGGLTLLWAYYVYRYLLNEKDLVLALGFLAQGLPVTKPSKVPWRQLFRKASVWAAICSQLCSACSFFILLSWLPTFFKETFPNSKGWVFNVVPWMLAIPASLFSGFISDRLISQGYRVITVRKFMQVMGLGLSSIFALCLGHTTSFLKAMIFASASIGFQTFNHSGISVNIQDLAPSCAGFLFGVANTAGALAGVVGVCLSGYLIETTGSWTCVFHLVAIISNLGLGTFLVFGKAQRVDLVPTHEDL.

The disordered stretch occupies residues 1–26 (MPSQRSSLMQPIPEETRKTPSAAAED). The next 11 helical transmembrane spans lie at 40 to 60 (ILLL…VCTV), 74 to 94 (GIVL…GGHL), 103 to 123 (VILL…LLAH), 129 to 149 (LAFL…YFPA), 169 to 189 (TVGA…SVLL), 192 to 212 (CGWQ…AYYV), 252 to 272 (VWAA…LLSW), 287 to 307 (WVFN…SGFI), 327 to 347 (VMGL…TSFL), 380 to 400 (GFLF…GVCL), and 413 to 433 (CVFH…LVFG).

It belongs to the major facilitator superfamily. Sodium/anion cotransporter family. In terms of tissue distribution, in brain, specifically expressed in the medulla and is associated with chromaffin granules (at protein level). Predominantly expressed in adrenal gland, brain and thyroid.

It is found in the cytoplasmic vesicle. It localises to the secretory vesicle. Its subcellular location is the chromaffin granule membrane. The protein resides in the secretory vesicle membrane. The protein localises to the lysosome membrane. It carries out the reaction ATP(in) = ATP(out). The catalysed reaction is ADP(in) = ADP(out). The enzyme catalyses GTP(in) = GTP(out). With respect to regulation, activity is chloride-dependent. Its function is as follows. Voltage-gated ATP nucleotide uniporter that can also transport the purine nucleotides ADP and GTP. Uses the membrane potential as the driving force to control ATP accumulation in lysosomes and secretory vesicles. By controlling ATP storage in lysosomes, regulates ATP-dependent proteins of these organelles. Also indirectly regulates the exocytosis of ATP through its import into lysosomes in astrocytes and secretory vesicles such as adrenal chromaffin granules, mucin granules and synaptic vesicles. The protein is Voltage-gated purine nucleotide uniporter SLC17A9 of Mus musculus (Mouse).